Reading from the N-terminus, the 464-residue chain is NADH dehydrogenase [ubiquinone] flavoprotein 1, mitochondrial (464 aa).

The N-terminal 20 residues, 1 to 20, are a transit peptide targeting the mitochondrion; the sequence is MLATRRLLGWSLPARVSVRF. Position 81 is an N6-acetyllysine; alternate (Lys-81). Lys-81 is modified (N6-succinyllysine; alternate). 87-96 provides a ligand contact to NADH; sequence GRGGAGFPTG. The residue at position 104 (Lys-104) is an N6-acetyllysine. Position 199–247 (199–247) interacts with FMN; the sequence is RGAGAYICGEETALIESIEGKQGKPRLKPPFPADVGVFGCPTTVANVET. Residue Arg-257 is modified to Omega-N-methylarginine. Lys-375 carries the post-translational modification N6-acetyllysine. Cys-379, Cys-382, Cys-385, and Cys-425 together coordinate [4Fe-4S] cluster.

It belongs to the complex I 51 kDa subunit family. Core subunit of respiratory chain NADH dehydrogenase (Complex I) which is composed of 45 different subunits. This is a component of the flavoprotein-sulfur (FP) fragment of the enzyme. Interacts with RAB5IF. FMN is required as a cofactor. Requires [4Fe-4S] cluster as cofactor.

The protein resides in the mitochondrion inner membrane. The enzyme catalyses a ubiquinone + NADH + 5 H(+)(in) = a ubiquinol + NAD(+) + 4 H(+)(out). Its function is as follows. Core subunit of the mitochondrial membrane respiratory chain NADH dehydrogenase (Complex I) which catalyzes electron transfer from NADH through the respiratory chain, using ubiquinone as an electron acceptor. Part of the peripheral arm of the enzyme, where the electrons from NADH are accepted by flavin mononucleotide (FMN) and then passed along a chain of iron-sulfur clusters by electron tunnelling to the final acceptor ubiquinone. Contains FMN, which is the initial electron acceptor as well as one iron-sulfur cluster. This is NADH dehydrogenase [ubiquinone] flavoprotein 1, mitochondrial from Pan troglodytes (Chimpanzee).